The primary structure comprises 623 residues: Xaa-Pro aminopeptidase 1 (623 aa).

R77 is an a peptide binding site. An N6-acetyllysine modification is found at K304. Residue H395 participates in a peptide binding. Mn(2+)-binding residues include D415, D426, and H489. A peptide is bound by residues H489, H498, and E523. 2 residues coordinate Mn(2+): E523 and E537.

Belongs to the peptidase M24B family. In terms of assembly, homodimer. Mn(2+) is required as a cofactor. Expressed in all tissues tested, including liver, adrenal decapsular tissue, adrenal capsular tissue, corpus luteum, testis, submandibular gland, thymus, brain, cerebellum and heart. Highest levels in testis.

Its subcellular location is the cytoplasm. The enzyme catalyses Release of any N-terminal amino acid, including proline, that is linked to proline, even from a dipeptide or tripeptide.. With respect to regulation, inhibited by inositol hexakisphosphate. Metalloaminopeptidase that catalyzes the removal of a penultimate prolyl residue from the N-termini of peptides, such as Arg-Pro-Pro. Contributes to the degradation of bradykinin. In Rattus norvegicus (Rat), this protein is Xaa-Pro aminopeptidase 1.